A 304-amino-acid polypeptide reads, in one-letter code: Oxygen-dependent coproporphyrinogen-III oxidase (304 aa).

S93 provides a ligand contact to substrate. H97 and H107 together coordinate a divalent metal cation. The Proton donor role is filled by H107. 109 to 111 (NVR) is a substrate binding site. A divalent metal cation contacts are provided by H146 and H176. Positions 241-276 (YVEFNLVYDRGTLFGLQSGGRTESILMSLPPQVRWA) are important for dimerization. Substrate is bound at residue 259–261 (GGR).

It belongs to the aerobic coproporphyrinogen-III oxidase family. As to quaternary structure, homodimer. Requires a divalent metal cation as cofactor.

Its subcellular location is the cytoplasm. It carries out the reaction coproporphyrinogen III + O2 + 2 H(+) = protoporphyrinogen IX + 2 CO2 + 2 H2O. The protein operates within porphyrin-containing compound metabolism; protoporphyrin-IX biosynthesis; protoporphyrinogen-IX from coproporphyrinogen-III (O2 route): step 1/1. Functionally, involved in the heme biosynthesis. Catalyzes the aerobic oxidative decarboxylation of propionate groups of rings A and B of coproporphyrinogen-III to yield the vinyl groups in protoporphyrinogen-IX. In Pseudomonas fluorescens (strain Pf0-1), this protein is Oxygen-dependent coproporphyrinogen-III oxidase.